Consider the following 1374-residue polypeptide: DNA-directed RNA polymerase subunit beta' (1374 aa).

The tract at residues 1–47 (MTSTSPKSRKPSTKTTKSKSKSKSKSKAAKAAAAGASPALARTPPQF) is disordered. Residues 7-28 (KSRKPSTKTTKSKSKSKSKSKA) show a composition bias toward basic residues. The segment covering 29 to 39 (AKAAAAGASPA) has biased composition (low complexity). Residues C258, C325, C332, and C335 each contribute to the Zn(2+) site. The segment at 1344 to 1374 (RPTGENELEEEQLPDPSALEGLQQEGLLTEE) is disordered. Positions 1362–1374 (LEGLQQEGLLTEE) are enriched in low complexity.

It belongs to the RNA polymerase beta' chain family. RpoC2 subfamily. In terms of assembly, in cyanobacteria the RNAP catalytic core is composed of 2 alpha, 1 beta, 1 beta', 1 gamma and 1 omega subunit. When a sigma factor is associated with the core the holoenzyme is formed, which can initiate transcription. It depends on Zn(2+) as a cofactor.

It carries out the reaction RNA(n) + a ribonucleoside 5'-triphosphate = RNA(n+1) + diphosphate. DNA-dependent RNA polymerase catalyzes the transcription of DNA into RNA using the four ribonucleoside triphosphates as substrates. This is DNA-directed RNA polymerase subunit beta' from Prochlorococcus marinus (strain MIT 9313).